We begin with the raw amino-acid sequence, 46 residues long: Elongation factor Tu (46 aa).

Residues 1–10 show a composition bias toward basic and acidic residues; sequence MAKGKFERSK. A disordered region spans residues 1 to 20; that stretch reads MAKGKFERSKPHVNVGTIGH. 19–26 is a GTP binding site; the sequence is GHVDHGKT.

The protein belongs to the GTP-binding elongation factor family. EF-Tu/EF-1A subfamily. As to quaternary structure, monomer.

The protein resides in the cytoplasm. This protein promotes the GTP-dependent binding of aminoacyl-tRNA to the A-site of ribosomes during protein biosynthesis. In Eikenella corrodens, this protein is Elongation factor Tu (tufA).